A 224-amino-acid polypeptide reads, in one-letter code: Heme response regulator HssR (224 aa).

The 114-residue stretch at 3-116 (NCLIVDDDKK…ELLFRIKAVL (114 aa)) folds into the Response regulatory domain. A 4-aspartylphosphate modification is found at Asp52. The segment at residues 124 to 222 (DNELQLGNLI…VRGQGYRVDQ (99 aa)) is a DNA-binding region (ompR/PhoB-type).

In terms of processing, phosphorylated by HssS.

The protein localises to the cytoplasm. Its function is as follows. Member of the two-component regulatory system HssS/HssR involved in intracellular heme homeostasis and tempering of staphylococcal virulence. Phosphorylated HssR binds to a direct repeat sequence within hrtAB promoter and activates the expression of hrtAB, an efflux pump, in response to extracellular heme, hemin, hemoglobin or blood. This chain is Heme response regulator HssR (hssR), found in Staphylococcus epidermidis (strain ATCC 35984 / DSM 28319 / BCRC 17069 / CCUG 31568 / BM 3577 / RP62A).